We begin with the raw amino-acid sequence, 305 residues long: MELIFLGTSAGVPTRTRNVTAILLNLQHPTQAGLWLFDCGEGTQHQMLNTAFNPGKLDRIFISHLHGDHLFGLPGLLCSRSMAGNAQPLTIYGPKGIREFTETALRLSGSWTDYPLEIVEITAGEILNDGLRKVTAFALEHPLECYGYRIEEHDKPGALDASALKAAGVKPGPLFQDLKAGKTVTLNDGRVINGADFLAPATPGKSVAIFGDTAPCASAITLAKGVDVMVHEATLDTSMEEKANSRGHSSTRQAAQLAHNAEVGQLIITHVSSRYDDRGCQRLLAECQAIFPATALAHDFAVFTV.

Residues His-64, His-66, Asp-68, His-69, His-141, Asp-212, and His-270 each contribute to the Zn(2+) site. The active-site Proton acceptor is the Asp-68.

This sequence belongs to the RNase Z family. RNase BN subfamily. Homodimer. The cofactor is Zn(2+).

In terms of biological role, zinc phosphodiesterase, which has both exoribonuclease and endoribonuclease activities. This Citrobacter koseri (strain ATCC BAA-895 / CDC 4225-83 / SGSC4696) protein is Ribonuclease BN.